The primary structure comprises 628 residues: uncharacterized protein (628 aa).

This sequence belongs to the IucA/IucC family.

This is an uncharacterized protein from Sinorhizobium fredii (strain NBRC 101917 / NGR234).